Reading from the N-terminus, the 272-residue chain is Formamidopyrimidine-DNA glycosylase (272 aa).

The Schiff-base intermediate with DNA role is filled by P2. E3 (proton donor) is an active-site residue. K58 functions as the Proton donor; for beta-elimination activity in the catalytic mechanism. DNA contacts are provided by H92, R111, and R153. Residues 238–272 (AVYGRQGQSCPRCGGLVERCRLGQRSTFFCPACQR) form an FPG-type zinc finger. The active-site Proton donor; for delta-elimination activity is the R262.

It belongs to the FPG family. Monomer. Zn(2+) serves as cofactor.

It catalyses the reaction Hydrolysis of DNA containing ring-opened 7-methylguanine residues, releasing 2,6-diamino-4-hydroxy-5-(N-methyl)formamidopyrimidine.. The enzyme catalyses 2'-deoxyribonucleotide-(2'-deoxyribose 5'-phosphate)-2'-deoxyribonucleotide-DNA = a 3'-end 2'-deoxyribonucleotide-(2,3-dehydro-2,3-deoxyribose 5'-phosphate)-DNA + a 5'-end 5'-phospho-2'-deoxyribonucleoside-DNA + H(+). In terms of biological role, involved in base excision repair of DNA damaged by oxidation or by mutagenic agents. Acts as a DNA glycosylase that recognizes and removes damaged bases. Has a preference for oxidized purines, such as 7,8-dihydro-8-oxoguanine (8-oxoG). Has AP (apurinic/apyrimidinic) lyase activity and introduces nicks in the DNA strand. Cleaves the DNA backbone by beta-delta elimination to generate a single-strand break at the site of the removed base with both 3'- and 5'-phosphates. The sequence is that of Formamidopyrimidine-DNA glycosylase from Laribacter hongkongensis (strain HLHK9).